The primary structure comprises 247 residues: 3(1)-hydroxy-L-isoleucine 4-dioxygenase (247 aa).

Residues His-160, Asp-162, and His-213 each coordinate Fe cation.

The protein belongs to the iron/ascorbate-dependent oxidoreductase family. L-ascorbate is required as a cofactor. It depends on Fe(2+) as a cofactor.

The catalysed reaction is 3(1)-hydroxy-L-isoleucine + 2-oxoglutarate + O2 = (4S)-3(1),4-dihydroxy-L-isoleucine + succinate + CO2. Catalyzes the hydroxylation of L-4'-hydroxyisoleucine (4'-HIL) at the C-4 position to form L-4,4'-dihydroxyisoleucine (4,4'-DIHIL). Together with HilA, catalyzes the two step conversion of L-isoleucine into L-4,4'-dihydroxyisoleucine. In vitro, in the absence of HilA, can also catalyze the oxidation of L-methionine and the C-4-hydroxylation of L-leucine and L-isoleucine. The chain is 3(1)-hydroxy-L-isoleucine 4-dioxygenase from Pantoea ananatis (strain AJ13355).